The sequence spans 362 residues: Beta-ketoacyl-[acyl-carrier-protein] synthase III 2 (362 aa).

Residues Cys-113 and His-251 contribute to the active site. Positions 252-256 (QANIR) are ACP-binding. Residue Asn-281 is part of the active site.

Belongs to the thiolase-like superfamily. FabH family. Homodimer.

It localises to the cytoplasm. It catalyses the reaction malonyl-[ACP] + acetyl-CoA + H(+) = 3-oxobutanoyl-[ACP] + CO2 + CoA. Its pathway is lipid metabolism; fatty acid biosynthesis. Functionally, catalyzes the condensation reaction of fatty acid synthesis by the addition to an acyl acceptor of two carbons from malonyl-ACP. Catalyzes the first condensation reaction which initiates fatty acid synthesis and may therefore play a role in governing the total rate of fatty acid production. Possesses both acetoacetyl-ACP synthase and acetyl transacylase activities. Its substrate specificity determines the biosynthesis of branched-chain and/or straight-chain of fatty acids. In Vibrio vulnificus (strain YJ016), this protein is Beta-ketoacyl-[acyl-carrier-protein] synthase III 2.